A 970-amino-acid chain; its full sequence is Testis anion transporter 1 (970 aa).

The Cytoplasmic portion of the chain corresponds to 1–95 (MAQLERSAIS…YRLKDWLLGD (95 aa)). A helical transmembrane segment spans residues 96–116 (LLAGISVGLVQVPQGLTLSLL). At 117-119 (ARQ) the chain is on the extracellular side. Residues 120–140 (LIPPLNIAYAAFCSSVIYVIF) form a helical membrane-spanning segment. Over 141 to 146 (GSCHQM) the chain is Cytoplasmic. A helical transmembrane segment spans residues 147–167 (SIGSFFLVSALLINVLKVSPF). At 168–202 (NNGQLVMGSFVKNEFSAPSYLMGYNKSLSVVATTT) the chain is on the extracellular side. N192 carries N-linked (GlcNAc...) asparagine glycosylation. Residues 203-223 (FLTGIIQLIMGVLGLGFIATY) traverse the membrane as a helical segment. Topologically, residues 224–232 (LPESAMSAY) are cytoplasmic. A helical transmembrane segment spans residues 233 to 253 (LAAVALHIMLSQLTFIFGIMI). The Extracellular segment spans residues 254 to 270 (SFHAGPISFFYDIINYC). The chain crosses the membrane as a helical span at residues 271–291 (VALPKANSTSILVFLTVVVAL). Over 292–307 (RINKCIRISFNQYPIE) the chain is Cytoplasmic. The chain crosses the membrane as a helical span at residues 308-328 (FPMELFLIIGFTVIANKISMA). Over 329–355 (TETSQTLIDMIPYSFLLPVTPDFSLLP) the chain is Extracellular. A helical membrane pass occupies residues 356–376 (KIILQAFSLSLVSSFLLIFLG). The Cytoplasmic segment spans residues 377 to 392 (KKIASLHNYSVNSNQD). The chain crosses the membrane as a helical span at residues 393–413 (LIAIGLCNVVSSFFRSCVFTG). Topologically, residues 414 to 429 (AIARTIIQDKSGGRQQ) are extracellular. Residues 430–450 (FASLVGAGVMLLLMVKMGHFF) form a helical membrane-spanning segment. At 451 to 452 (YT) the chain is on the cytoplasmic side. Residues 453-473 (LPNAVLAGIILSNVIPYLETI) traverse the membrane as a helical segment. Topologically, residues 474–497 (SNLPSLWRQDQYDCALWMMTFSSS) are extracellular. Residues 498-518 (IFLGLDIGLIISVVSAFFITT) traverse the membrane as a helical segment. At 519–970 (VRSHRAKILL…SPEGNSNEDV (452 aa)) the chain is on the cytoplasmic side. Residues 543–795 (DYREIITIPG…LSVHDAVLFA (253 aa)) enclose the STAS domain. The tract at residues 664–970 (TVSSVSQKNQ…SPEGNSNEDV (307 aa)) is interaction with RACGAP1. Over residues 858–868 (SELDLELESEQ) the composition is skewed to acidic residues. Positions 858-970 (SELDLELESE…SPEGNSNEDV (113 aa)) are disordered. Over residues 877–898 (DLDRELEPEMEPKAETETKTQT) the composition is skewed to basic and acidic residues. The segment covering 938–948 (STQSQTQTRTW) has biased composition (low complexity).

This sequence belongs to the SLC26A/SulP transporter (TC 2.A.53) family. As to quaternary structure, interacts with RACGAP1. Interacts with CFTR; stimulates anion transport activity of CFTR. In terms of processing, N-glycosylated. Expression observed exclusively in testis, restricted to the meiotic phase of the germ cell. Abundant expression located in the seminiferous tubules, concentrated on the luminal side of the tubuli harboring the spermatocytes and spermatids.

Its subcellular location is the membrane. It carries out the reaction sulfate(out) + chloride(in) = sulfate(in) + chloride(out). It catalyses the reaction oxalate(in) + chloride(out) = oxalate(out) + chloride(in). Activity is inhibited by 4,4'-Di-isothiocyanatostilbene-2,2'-disulfonic acid (DIDS - an inhibitor of several anion channels and transporters) and gluconate. Antiporter that mediates the exchange of sulfate and oxalate against chloride ions across a membrane. Stimulates anion transport activity of CFTR. May cooperate with CFTR in the regulation of chloride and bicarbonate ions fluxes required for activation of the ADCY10/PKA pathway during sperm motility and sperm capacitation. May play a role in sperm tail differentiation and motility and hence male fertility. This chain is Testis anion transporter 1, found in Homo sapiens (Human).